Reading from the N-terminus, the 408-residue chain is Peptidase T (408 aa).

His78 contacts Zn(2+). Asp80 is an active-site residue. Asp140 provides a ligand contact to Zn(2+). The active-site Proton acceptor is Glu173. Glu174, Asp196, and His379 together coordinate Zn(2+).

The protein belongs to the peptidase M20B family. It depends on Zn(2+) as a cofactor.

It localises to the cytoplasm. The catalysed reaction is Release of the N-terminal residue from a tripeptide.. Cleaves the N-terminal amino acid of tripeptides. The chain is Peptidase T from Escherichia coli O9:H4 (strain HS).